Reading from the N-terminus, the 430-residue chain is MPYIESILAREVLDSRGNPTVEVEVYTESGAFGKAIVPSGASTGQHESVELRDCDAKRFLGKGVLQAVKNVTEVIQPELEGYSVLEQTLIDKLLIKVDGTPNKSNLGANAILGVSLACAKAAANYLNLEFYQYVGGVWPKQMPVPMMNVINGGAHASNSVDFQEFMILPIGAPSFKEALRYGAEVFHHLGKILKQKGLPTTVGDEGGYAPDLNSNEEALQIILEAIKSAGYEPGKDIFLGMDVAASEFYDKKIQKYVLASENNKSFSSKELVHYYETLVAKYPIISIEDGLDENDWDGWKYLTQKLGNQIQLVGDDLFVTNTQKLAKGIENKIGNSILIKLNQIGTLTETLETIEMAKKASYTAVISHRSGETEDTTIADLAVATNSGQIKTGSCSRTDRIAKYNQLLRIEDQLVEAPFLGLKTFYNLKK.

Q163 is a (2R)-2-phosphoglycerate binding site. Catalysis depends on E205, which acts as the Proton donor. Mg(2+) is bound by residues D242, E288, and D315. Positions 340, 369, 370, and 391 each coordinate (2R)-2-phosphoglycerate. K340 acts as the Proton acceptor in catalysis.

Belongs to the enolase family. Mg(2+) serves as cofactor.

The protein resides in the cytoplasm. The protein localises to the secreted. It localises to the cell surface. The catalysed reaction is (2R)-2-phosphoglycerate = phosphoenolpyruvate + H2O. It participates in carbohydrate degradation; glycolysis; pyruvate from D-glyceraldehyde 3-phosphate: step 4/5. Functionally, catalyzes the reversible conversion of 2-phosphoglycerate (2-PG) into phosphoenolpyruvate (PEP). It is essential for the degradation of carbohydrates via glycolysis. The protein is Enolase of Aster yellows witches'-broom phytoplasma (strain AYWB).